The sequence spans 158 residues: Sec-independent protein translocase protein TatB (158 aa).

Residues 2–22 (FDGIGFMELLLIGVLGLVVLG) form a helical membrane-spanning segment. The segment at 86–158 (LKQAAQSVNR…DTSSNPKANG (73 aa)) is disordered. 3 stretches are compositionally biased toward polar residues: residues 88–107 (QAAQ…SQGT), 113–136 (QIHS…QHLT), and 143–158 (EPSQ…KANG).

The protein belongs to the TatB family. As to quaternary structure, the Tat system comprises two distinct complexes: a TatABC complex, containing multiple copies of TatA, TatB and TatC subunits, and a separate TatA complex, containing only TatA subunits. Substrates initially bind to the TatABC complex, which probably triggers association of the separate TatA complex to form the active translocon.

The protein resides in the cell inner membrane. In terms of biological role, part of the twin-arginine translocation (Tat) system that transports large folded proteins containing a characteristic twin-arginine motif in their signal peptide across membranes. Together with TatC, TatB is part of a receptor directly interacting with Tat signal peptides. TatB may form an oligomeric binding site that transiently accommodates folded Tat precursor proteins before their translocation. The polypeptide is Sec-independent protein translocase protein TatB (Shewanella putrefaciens (strain CN-32 / ATCC BAA-453)).